Consider the following 613-residue polypeptide: MPTYRSATTTHGRNMAGARALWRATGVKEDDFGKPIIAVVNSFTQFVPGHVHLKDMGQLVAGEIEKAGGIAKEFNTIAVDDGIAMGHGGMLYSLPSRELIADSVEYMVNAHCADAMVCISNCDKITPGMMMAAMRLNIPVIFVSGGPMEAGKTKLSDQIIKLDLVDAMIQGADPTVSDAQSEQIERSACPTCGSCSGMFTANSMNCLTEALGLSQPGNGSMLATHADREQLFINAGKRIVELTKRYYEQDDESALPRNIADRAAFENAMALDIAMGGSSNTVLHLLASAQEGEIDFDMGDIDEMSRRVPHLCKVAPSTPKYHMEDVHRAGGVMAILGELDRAGLLNNQTKTVLGLTMQEQLAQYDIMQTEDEEILKFFRAGPAGIRTTKAFSQDCRWDRLDDDRKEGCIRTKENAFSQEGGLAVLSGNIAVDGCIVKTAGVDEENLKFQGPAIVFESQDSAVEGILGGKVKAGEVVVIRYEGPKGGPGMQEMLYPTTYLKSMGLGKACALLTDGRFSGGTSGLSIGHASPEAASGGTIGLVNDGDIITIDIPSRSITLDVPESELQARRAKQDELGWKPVNRQREVSFALKAYASMATSADKGAVRDKSKLEG.

Asp-81 serves as a coordination point for Mg(2+). Cys-122 is a binding site for [2Fe-2S] cluster. Mg(2+)-binding residues include Asp-123 and Lys-124. Position 124 is an N6-carboxylysine (Lys-124). Cys-195 lines the [2Fe-2S] cluster pocket. Residue Glu-491 coordinates Mg(2+). Ser-517 (proton acceptor) is an active-site residue.

It belongs to the IlvD/Edd family. Homodimer. It depends on [2Fe-2S] cluster as a cofactor. Mg(2+) is required as a cofactor.

The enzyme catalyses (2R)-2,3-dihydroxy-3-methylbutanoate = 3-methyl-2-oxobutanoate + H2O. The catalysed reaction is (2R,3R)-2,3-dihydroxy-3-methylpentanoate = (S)-3-methyl-2-oxopentanoate + H2O. It functions in the pathway amino-acid biosynthesis; L-isoleucine biosynthesis; L-isoleucine from 2-oxobutanoate: step 3/4. The protein operates within amino-acid biosynthesis; L-valine biosynthesis; L-valine from pyruvate: step 3/4. Its function is as follows. Functions in the biosynthesis of branched-chain amino acids. Catalyzes the dehydration of (2R,3R)-2,3-dihydroxy-3-methylpentanoate (2,3-dihydroxy-3-methylvalerate) into 2-oxo-3-methylpentanoate (2-oxo-3-methylvalerate) and of (2R)-2,3-dihydroxy-3-methylbutanoate (2,3-dihydroxyisovalerate) into 2-oxo-3-methylbutanoate (2-oxoisovalerate), the penultimate precursor to L-isoleucine and L-valine, respectively. The polypeptide is Dihydroxy-acid dehydratase (Aliivibrio fischeri (strain ATCC 700601 / ES114) (Vibrio fischeri)).